Here is a 281-residue protein sequence, read N- to C-terminus: Protein DOG1-like 1 (281 aa).

One can recognise a DOG1 domain in the interval 9 to 265 (EKLQQDCYNE…HEWGKSREHR (257 aa)). Residues 262 to 281 (REHRRLEASGGDSGGNVTRE) form a disordered region.

This Arabidopsis thaliana (Mouse-ear cress) protein is Protein DOG1-like 1.